The following is a 293-amino-acid chain: tRNA-cytidine(32) 2-sulfurtransferase (293 aa).

The short motif at 71 to 76 (SGGKDS) is the PP-loop motif element. Residues Cys-146, Cys-149, and Cys-237 each contribute to the [4Fe-4S] cluster site.

Belongs to the TtcA family. Homodimer. Mg(2+) serves as cofactor. It depends on [4Fe-4S] cluster as a cofactor.

The protein localises to the cytoplasm. It carries out the reaction cytidine(32) in tRNA + S-sulfanyl-L-cysteinyl-[cysteine desulfurase] + AH2 + ATP = 2-thiocytidine(32) in tRNA + L-cysteinyl-[cysteine desulfurase] + A + AMP + diphosphate + H(+). The protein operates within tRNA modification. Its function is as follows. Catalyzes the ATP-dependent 2-thiolation of cytidine in position 32 of tRNA, to form 2-thiocytidine (s(2)C32). The sulfur atoms are provided by the cysteine/cysteine desulfurase (IscS) system. The polypeptide is tRNA-cytidine(32) 2-sulfurtransferase (Sinorhizobium medicae (strain WSM419) (Ensifer medicae)).